A 607-amino-acid polypeptide reads, in one-letter code: Replication factor C large subunit (607 aa).

55-62 (GPAGIGKT) provides a ligand contact to ATP. Residues 468–607 (EEEKPQKEGS…PKNQKTLFDF (140 aa)) are disordered. Positions 506 to 518 (TSEKKENSEKKEN) are enriched in basic and acidic residues. A compositionally biased stretch (polar residues) spans 548 to 558 (SESVEQKTSSK).

This sequence belongs to the activator 1 small subunits family. RfcL subfamily. As to quaternary structure, heteromultimer composed of small subunits (RfcS) and large subunits (RfcL).

Functionally, part of the RFC clamp loader complex which loads the PCNA sliding clamp onto DNA. The chain is Replication factor C large subunit from Methanosarcina acetivorans (strain ATCC 35395 / DSM 2834 / JCM 12185 / C2A).